We begin with the raw amino-acid sequence, 415 residues long: Ornithine cyclodeaminase (415 aa).

NAD(+) contacts are provided by asparagine 241, alanine 242, aspartate 320, threonine 352, leucine 354, histidine 355, aspartate 373, aspartate 396, and valine 397.

The protein belongs to the AgrE/ArgZ ornithine cyclodeaminase family. NAD(+) is required as a cofactor.

The catalysed reaction is L-ornithine = L-proline + NH4(+). In terms of biological role, catalyzes the conversion of ornithine to proline, with the release of ammonia. This is Ornithine cyclodeaminase from Methanococcus maripaludis (strain DSM 14266 / JCM 13030 / NBRC 101832 / S2 / LL).